Consider the following 105-residue polypeptide: ATP-dependent Clp protease adapter protein ClpS (105 aa).

It belongs to the ClpS family. Binds to the N-terminal domain of the chaperone ClpA.

Its function is as follows. Involved in the modulation of the specificity of the ClpAP-mediated ATP-dependent protein degradation. This is ATP-dependent Clp protease adapter protein ClpS from Streptomyces avermitilis (strain ATCC 31267 / DSM 46492 / JCM 5070 / NBRC 14893 / NCIMB 12804 / NRRL 8165 / MA-4680).